We begin with the raw amino-acid sequence, 574 residues long: Phenylalanine--tRNA ligase beta subunit (574 aa).

The 76-residue stretch at 278 to 353 (LTPKEFEVEL…IAYGYNEIEP (76 aa)) folds into the B5 domain. Mg(2+) is bound by residues Asp331, Asp337, Glu340, and Asp341.

This sequence belongs to the phenylalanyl-tRNA synthetase beta subunit family. Type 2 subfamily. As to quaternary structure, tetramer of two alpha and two beta subunits. Mg(2+) is required as a cofactor.

The protein localises to the cytoplasm. The catalysed reaction is tRNA(Phe) + L-phenylalanine + ATP = L-phenylalanyl-tRNA(Phe) + AMP + diphosphate + H(+). The protein is Phenylalanine--tRNA ligase beta subunit of Thermococcus kodakarensis (strain ATCC BAA-918 / JCM 12380 / KOD1) (Pyrococcus kodakaraensis (strain KOD1)).